Consider the following 226-residue polypeptide: 3-dehydroquinate dehydratase (226 aa).

Residues Glu33–Arg35 and Arg65 each bind 3-dehydroquinate. His120 functions as the Proton donor/acceptor in the catalytic mechanism. The Schiff-base intermediate with substrate role is filled by Lys147. 3 residues coordinate 3-dehydroquinate: Arg186, Ser205, and Gln209.

The protein belongs to the type-I 3-dehydroquinase family. As to quaternary structure, homodimer.

The enzyme catalyses 3-dehydroquinate = 3-dehydroshikimate + H2O. The protein operates within metabolic intermediate biosynthesis; chorismate biosynthesis; chorismate from D-erythrose 4-phosphate and phosphoenolpyruvate: step 3/7. Functionally, involved in the third step of the chorismate pathway, which leads to the biosynthesis of aromatic amino acids. Catalyzes the cis-dehydration of 3-dehydroquinate (DHQ) and introduces the first double bond of the aromatic ring to yield 3-dehydroshikimate. In Thermodesulfovibrio yellowstonii (strain ATCC 51303 / DSM 11347 / YP87), this protein is 3-dehydroquinate dehydratase.